The sequence spans 787 residues: Transcriptional corepressor LEUNIG_HOMOLOG (787 aa).

Residues 1–88 (MAQSNWEADK…IEAQQGKAKE (88 aa)) form a required for SEU-binding region. The LisH domain maps to 8 to 40 (ADKMLDVYIYDYLVKKKLHNTAKSFMTEGKVSP). Residues 77 to 106 (AYIEAQQGKAKEQQMQIQQLQMMRQAQMQR) adopt a coiled-coil conformation. The disordered stretch occupies residues 299–413 (NMTNSPMYGG…TPSTHTPVDG (115 aa)). Composition is skewed to low complexity over residues 336–346 (SIGSPMQSSSS) and 355–372 (QQSSSQQQDHLLSQQSQQ). Positions 380-409 (PSSSGPANSTGTGNTVGPSNSQPSTPSTHT) are enriched in polar residues. 7 WD repeats span residues 508-547 (KSASKVICCSFSYDGKLLASAGHDKKVFIWNMETLQVEST), 550-589 (EHAHIITDVRFRPNSTQLATSSFDKTIKIWDASDPGYFLR), 593-633 (GHAA…VRAV), 635-671 (GASTQVRFQPRTGQFLAAASENTVSIFDIENNNKRVN), 675-715 (GHSS…HELS), 717-755 (SGNKFHSVVFHPSYPDLLVIGGYQAIELWNTMENKCMTV), and 757-787 (GHECVISALAQSPSTGVVASASHDKSVKIWK).

In terms of assembly, forms corepressor complexes with SLK1 and SLK2; LUH is the transcription repressor subunit and SLK1 and SLK2 the specific DNA-binding adapters. Interacts with SEU. Binds to YAB3, YAB5 and YAB1/FIL; these complexes promote adaxial cell identity in leaves as well as embryonic shoot apical meristem (SAM) initiation and postembryonic SAM maintenance. In terms of tissue distribution, expressed in roots, stems, leaves, seedlings, apex, flowers, siliques, flower organs and seeds (including seed coat).

The protein localises to the nucleus. Transcription repressor subunit of the SEU-SLK1 and SEU-SLK2 transcriptional corepressor of abiotic stress (e.g. salt and osmotic stress) response genes, by means of an epigenetic process involving histone modification (e.g. H3K9 and H3K14 acetylation), probably by recruiting HDAC, to facilitate the condensation of chromatin thus preventing transcription at the target genes. Can also act as a transcription activator. Implicated in embryo and floral development. Involved in post-synthesis cell wall modifications necessary for mucilage extrusion from seeds upon imbibition, probably by promoting the expression of genes required for mucilage maturation (e.g. MUM2). Regulates the maintenance on leaf polarity and meristem activity as well as the initiation of embryonic shoot apical meristem (SAM) development. This Arabidopsis thaliana (Mouse-ear cress) protein is Transcriptional corepressor LEUNIG_HOMOLOG.